Here is a 321-residue protein sequence, read N- to C-terminus: MIFATLEHILTHISFSIISIVITIHLVTLLVHEIVGLCDPSEKGMIAAFFCITGLLVTRWIYSRHFPLSDLYESLMFLSWSFSIIHMVPKIWNHKNDLSAITAPSAIFTQGFATSGLSTEMHQSAILVPALQSQWLMMHVSMMLLSYAALLCGSLLSVALLVITFRKNIGIVGKSNHLLIGSFSFDEIHYLNEKRNVLQNTSFLSFRNYHRYQLTQRLDYWSYRVISLGFTFLTIGILSGAVWANEAWGSYWNWDPKETWAFITWTIFAIYLHTRTNRSLQGVNSAIVASMGFLIIWICYFGVNLLGIGLHSYGSFTLTSN.

7 helical membrane-spanning segments follow: residues 17-37 (IISIVITIHLVTLLVHEIVGL), 43-63 (KGMIAAFFCITGLLVTRWIYS), 71-91 (LYESLMFLSWSFSIIHMVPKI), 143-163 (MLLSYAALLCGSLLSVALLVI), 225-245 (VISLGFTFLTIGILSGAVWAN), 258-273 (ETWAFITWTIFAIYLH), and 286-306 (AIVASMGFLIIWICYFGVNLL).

It belongs to the CcmF/CycK/Ccl1/NrfE/CcsA family. May interact with Ccs1.

The protein resides in the plastid. Its subcellular location is the chloroplast thylakoid membrane. Its function is as follows. Required during biogenesis of c-type cytochromes (cytochrome c6 and cytochrome f) at the step of heme attachment. The sequence is that of Cytochrome c biogenesis protein CcsA from Liriodendron tulipifera (Tuliptree).